The primary structure comprises 435 residues: Sex peptide receptor (435 aa).

The Extracellular segment spans residues 1–93 (MDNYTDVLYQ…PLEYAMPLYG (93 aa)). Residues 94–114 (YCMPFLLIITIISNSLIVLVL) form a helical membrane-spanning segment. Topologically, residues 115–124 (SKKSMATPTN) are cytoplasmic. A helical transmembrane segment spans residues 125–145 (FVLMGMAICDMLTVIFPAPGL). Residues 146-168 (WYMYTFGNHYKPLHPVSMCLAYS) are Extracellular-facing. Residues 169 to 189 (IFNEIMPAMCHTISVWLTLAL) form a helical membrane-spanning segment. At 190-211 (AVQRYIYVCHAPMARTWCTMPR) the chain is on the cytoplasmic side. The chain crosses the membrane as a helical span at residues 212–229 (VRRCTAYIALLAFLHQLP). The Extracellular segment spans residues 230–276 (RFFDRTYMPLVIEWNGSPTEVCHLETSMWVHDYIGVDLYYTSYYLFR). The chain crosses the membrane as a helical span at residues 277-297 (VLFVHLLPCIILVTLNILLFA). The Cytoplasmic segment spans residues 298–327 (AMRQAQERRKLLFRENRKKECKKLRETNCT). Residues 328–348 (TLMLIVVVSVFLLAEIPIAVV) form a helical membrane-spanning segment. The Extracellular portion of the chain corresponds to 349–368 (TAMHIVSSLIIEFLDYGLAN). Residues 369–389 (ICIMLTNFFLVFSYPINFGIY) traverse the membrane as a helical segment. At 390 to 435 (CGMSRQFRETFKEIFLGRLMAKKDSSTKYSIVNGARTCTNTNETVL) the chain is on the cytoplasmic side.

It belongs to the G-protein coupled receptor 1 family. As to expression, in the female, expressed in the reproductive organs; strongly expressed in the spermathecae and the lower oviduct. No expression in the male reproductive organs. In the central nervous system of both sexes, it is expressed in the brain and ventral nerve cord (VNC); strongly expressed in the ventral regions of the suboesophageal ganglion, the cervical connective and in many nerve roots of the brain and VNC. Expressed in the s-LNvs and l-LNvs pdf neurons (at protein level).

The protein resides in the cell membrane. Functionally, receptor for two functionally unrelated ligands; SP (A70A) for controlling reproductive behaviors and MIP for controlling sleep behavior. MIP-SPR pathway functions as a sleep homeostat which perceives the need for sleep and stabilizes it by providing a slow-acting inhibitory input to the fly arousal system that involve the pigment dispersing factor (pdf) neurons. SP-SPR is one of the multiple SP pathways that induce female post-mating behavioral responses (PMR) such as the suppression of mating receptivity and initiation of egg laying. The PMR switch is achieved by mediating the synaptic output of neurons such as those expressing fruitless (fru), double sex (dsx) and pickpocket (ppk). This chain is Sex peptide receptor, found in Drosophila melanogaster (Fruit fly).